We begin with the raw amino-acid sequence, 489 residues long: Protein nucleotidyltransferase YdiU (489 aa).

Positions 88, 90, 91, 111, 123, 124, 174, and 181 each coordinate ATP. The active-site Proton acceptor is the Asp-250. Mg(2+)-binding residues include Asn-251 and Asp-260. Asp-260 is a binding site for ATP.

The protein belongs to the SELO family. Mg(2+) is required as a cofactor. Mn(2+) serves as cofactor.

The catalysed reaction is L-seryl-[protein] + ATP = 3-O-(5'-adenylyl)-L-seryl-[protein] + diphosphate. The enzyme catalyses L-threonyl-[protein] + ATP = 3-O-(5'-adenylyl)-L-threonyl-[protein] + diphosphate. It carries out the reaction L-tyrosyl-[protein] + ATP = O-(5'-adenylyl)-L-tyrosyl-[protein] + diphosphate. It catalyses the reaction L-histidyl-[protein] + UTP = N(tele)-(5'-uridylyl)-L-histidyl-[protein] + diphosphate. The catalysed reaction is L-seryl-[protein] + UTP = O-(5'-uridylyl)-L-seryl-[protein] + diphosphate. The enzyme catalyses L-tyrosyl-[protein] + UTP = O-(5'-uridylyl)-L-tyrosyl-[protein] + diphosphate. Nucleotidyltransferase involved in the post-translational modification of proteins. It can catalyze the addition of adenosine monophosphate (AMP) or uridine monophosphate (UMP) to a protein, resulting in modifications known as AMPylation and UMPylation. This Vibrio parahaemolyticus serotype O3:K6 (strain RIMD 2210633) protein is Protein nucleotidyltransferase YdiU.